The primary structure comprises 280 residues: F-box only protein 27 (280 aa).

Residues 1-26 (MGAWASRGRAARVPAPEPESEPEEAL) are disordered. Residues 25 to 72 (ALDLSQLPPELLLVVLSHVPPRTLLGRCRQVCRGWRALVDGQALWLLI) enclose the F-box domain. An FBA domain is found at 100–277 (PCPLGRFCAR…VTNSSVIVRV (178 aa)).

As to quaternary structure, part of a SCF (SKP1-cullin-F-box) protein ligase complex. Interacts with SKP1 and CUL1.

Functionally, substrate-recognition component of the SCF (SKP1-CUL1-F-box protein)-type E3 ubiquitin ligase complex. Able to recognize and bind complex-type oligosaccharides. The chain is F-box only protein 27 (FBXO27) from Macaca fascicularis (Crab-eating macaque).